We begin with the raw amino-acid sequence, 1024 residues long: Protein tiptop (1024 aa).

The segment covering 20-35 (ELTSPRCQSRDSNTSA) has biased composition (polar residues). Disordered regions lie at residues 20–40 (ELTS…AGAG) and 138–215 (EGEV…ISAD). A compositionally biased stretch (acidic residues) spans 159–175 (DDQEEDQEQDQEQEQEQ). The C2H2-type 1 zinc-finger motif lies at 317-341 (FKCVWCKQSFSTLANLTAHMKETQH). Residues 350–392 (LPTGGVGTPSAPPPTRLATSASNSACSSSSSSTSSSSNSSKSE) are disordered. Over residues 368–391 (TSASNSACSSSSSSTSSSSNSSKS) the composition is skewed to low complexity. The C2H2-type 2 zinc-finger motif lies at 426–450 (LKCMWCGQSFRSLAEMTSHMQETQH). Disordered stretches follow at residues 466–489 (GDER…SSPS), 519–576 (AQKS…SLDS), 712–759 (SRDR…IKAE), 786–818 (FSME…SLLA), and 868–891 (ETTD…ASAT). Low complexity predominate over residues 477 to 489 (VPSTSTAAPSSPS). The C2H2-type 3 zinc-finger motif lies at 499–523 (LTCKVCDQAFGSLKELSTHMAQKSH). A compositionally biased stretch (low complexity) spans 527–537 (SPAPSASPPAA). The segment covering 543 to 558 (KRGRQNRNEKRKKSLP) has biased composition (basic residues). The span at 718–729 (SESSSASRVESS) shows a compositional bias: low complexity. A compositionally biased stretch (pro residues) spans 745 to 755 (TPAPPPPPPPT). Basic and acidic residues predominate over residues 786–795 (FSMEACRESP). Residues 796–808 (RSVSKSPAPQTER) are compositionally biased toward polar residues. The span at 874 to 891 (STGLRSASSAGSSTASAT) shows a compositional bias: low complexity. A C2H2-type 4 zinc finger spans residues 926–949 (IKCSYCDTPFASKGAYRHHLSKVH). The segment at 954-1004 (AGEDSPRLKSPAVQSPRSMPLASPRRSASRSPATGSQQPPPSPTISPYDES) is disordered. The segment covering 968-990 (SPRSMPLASPRRSASRSPATGSQ) has biased composition (low complexity).

This sequence belongs to the teashirt C2H2-type zinc-finger protein family. In terms of tissue distribution, expression in the Malpighian tubules (MTs) and stomatogastric nervous system starts at embryonic stage 10. At stage 11, expression in the head domain is initiated in the clypeolabrum in two bilaterally symmetric clusters of cells. At stage 12, expression appears in the central nervous system (CNS) of the trunk and the epidermis. The staining in the hindgut is maintained throughout embryogenesis. At stage 13, expression is present in elongating MTs. The anterior staining is detected in cells that invaginate into the stomodeum and by stage 15 onwards, in cells close to the pharynx. Also expressed in cells of the brain, the second constriction of the gut, the trunk epidermis, the anterior segments of the CNS (the three thoracic and the first two abdominal segments) and in the MTs. From stage 12 onwards, tsh and tio are colocalized in some cells.

The protein resides in the nucleus. Functionally, tiptop (tio) and teashirt (tsh) have, on the whole, common activities. Tio and tsh repress each other's expression and tsh has a crucial role for trunk patterning that is in part masked by ectopic expression of tiptop. Both genes share a common activity required for the activation of Ser and svb and the maintenance of en and wg. This chain is Protein tiptop (tio), found in Drosophila melanogaster (Fruit fly).